We begin with the raw amino-acid sequence, 180 residues long: Ribosome maturation factor RimM (180 aa).

Positions 108 to 180 (PDEYYWVDLE…LIVVDWDPDF (73 aa)) constitute a PRC barrel domain.

This sequence belongs to the RimM family. Binds ribosomal protein uS19.

The protein localises to the cytoplasm. An accessory protein needed during the final step in the assembly of 30S ribosomal subunit, possibly for assembly of the head region. Essential for efficient processing of 16S rRNA. May be needed both before and after RbfA during the maturation of 16S rRNA. It has affinity for free ribosomal 30S subunits but not for 70S ribosomes. The sequence is that of Ribosome maturation factor RimM from Xanthomonas euvesicatoria pv. vesicatoria (strain 85-10) (Xanthomonas campestris pv. vesicatoria).